The sequence spans 203 residues: Akirin-2 (203 aa).

2 positions are modified to phosphoserine: Ser-18 and Ser-21. The Nuclear localization signal motif lies at 22-27 (PKRRRC). Position 57 is a phosphoserine (Ser-57). The short motif at 200-203 (SYVS) is the SYVS motif element.

This sequence belongs to the akirin family. In terms of assembly, homodimer. Interacts with IPO9; the interaction is direct. Associates with 20S and 26S proteasomes. Interacts with SMARCD1; promoting SWI/SNF complex recruitment. Interacts with NFKBIZ. Interacts with YWHAB. In terms of processing, polyubiquitinated. Polyubiquitination is dependent of UBR5 that extends pre-ubiquitinated AKIRIN2. As to expression, widely expressed. Most abundant in the lung, followed by the skeletal muscle, heart, liver, fat, thymus, lymph node, small intestine, kidney and spleen. In skeletal muscle, expressed at higher level in fast extensor digitorum longus (EDL) and longissimus lumborum (LL) muscles than in slow soleus (SOL) muscles.

The protein localises to the nucleus. The protein resides in the cytoplasm. It localises to the membrane. Its function is as follows. Molecular adapter that acts as a bridge between a variety of multiprotein complexes, and which is involved in embryonic development, immunity, myogenesis and brain development. Plays a key role in nuclear protein degradation by promoting import of proteasomes into the nucleus: directly binds to fully assembled 20S proteasomes at one end and to nuclear import receptor IPO9 at the other end, bridging them together and mediating the import of pre-assembled proteasome complexes through the nuclear pore. Involved in innate immunity by regulating the production of interleukin-6 (IL6) downstream of Toll-like receptor (TLR): acts by bridging the NF-kappa-B inhibitor NFKBIZ and the SWI/SNF complex, leading to promote induction of IL6. Also involved in adaptive immunity by promoting B-cell activation. Involved in brain development: required for the survival and proliferation of cerebral cortical progenitor cells. Involved in myogenesis: required for skeletal muscle formation and skeletal development, possibly by regulating expression of muscle differentiation factors. The protein is Akirin-2 of Sus scrofa (Pig).